The sequence spans 548 residues: Calcium-transporting ATPase (548 aa).

The N-terminal stretch at 1 to 21 (MNFKSTVITAMCCFFSFAVLA) is a signal peptide. Positions 37 and 78 each coordinate a divalent metal cation. The active-site Phosphothreonine intermediate is the threonine 78. Substrate-binding positions include asparagine 99 and 160–162 (KDR). An ATP-binding motif is present at residues 179 to 187 (DGKTGDWIT). 5 residues coordinate a divalent metal cation: aspartate 305, histidine 309, aspartate 352, histidine 353, and histidine 488.

It depends on Mg(2+) as a cofactor.

It localises to the cell inner membrane. It carries out the reaction Ca(2+)(in) + ATP + H2O = Ca(2+)(out) + ADP + phosphate + H(+). Completely inhibited by vanadate(3-). Also inhibited by lanthanoid atom and phosphate. Not inhibited by N-ethylmaleimide, 1,3-dicyclohexylcarbodiimide, oligomycin, ouabain, valinomycin, nigericin, thapsigargin, cyclopiazonic acid or fluorescein isothiocyanate. Catalyzes the hydrolysis of ATP coupled with the transport of calcium. Has some hydrolysis activity also with dATP, GTP, UTP, ITP and 4-nitrophenyl phosphate as substrate. No activity with ADP, CTP, acetyl dihydrogen phosphate or AMP-PNP as substrate. This Myroides odoratus (Flavobacterium odoratum) protein is Calcium-transporting ATPase.